The primary structure comprises 188 residues: SAYSvFN domain-containing protein 1 (188 aa).

Positions 1 to 10 (MEQRLAEFRE) are enriched in basic and acidic residues. Disordered stretches follow at residues 1–43 (MEQR…ATPK) and 60–80 (AIAQ…PEST). Over 1–100 (MEQRLAEFRE…SFLTNITFLK (100 aa)) the chain is Cytoplasmic. Composition is skewed to low complexity over residues 22-43 (STSS…ATPK) and 60-75 (AIAQ…AGQQ). The interval 86-100 (SSCRQSFLTNITFLK) is middle helical (MH). Positions 101–121 (VLLWLVLLGLFVELEFGLAYF) form an intramembrane region, helical. The Cytoplasmic segment spans residues 122–188 (VLSMFYWMYV…RTSPSCSSYP (67 aa)).

This sequence belongs to the SAYSD1 family. As to quaternary structure, associates (via N-terminus) with ribosomes. As to expression, enriched in testis; predominantly expressed in round and elongating spermatids.

The protein resides in the endoplasmic reticulum membrane. It is found in the cytoplasmic vesicle membrane. In terms of biological role, ufmylation 'reader' component of a translocation-associated quality control pathway, a mechanism that takes place when a ribosome has stalled during translation, and which is required to degrade clogged substrates. Specifically recognizes and binds ufmylated ribosomes when a ribosome has stalled, promoting the transport of stalled nascent chain via the TRAPP complex to lysosomes for degradation. The polypeptide is SAYSvFN domain-containing protein 1 (Mus musculus (Mouse)).